Here is a 202-residue protein sequence, read N- to C-terminus: Small ribosomal subunit protein uS4 (202 aa).

Residues 18 to 44 (LPGLTRKSARREYPPGQHGQGRRKRSE) are disordered. The 63-residue stretch at 90-152 (MRLDNTVFRL…DRSRKLIEAN (63 aa)) folds into the S4 RNA-binding domain.

The protein belongs to the universal ribosomal protein uS4 family. In terms of assembly, part of the 30S ribosomal subunit. Contacts protein S5. The interaction surface between S4 and S5 is involved in control of translational fidelity.

Functionally, one of the primary rRNA binding proteins, it binds directly to 16S rRNA where it nucleates assembly of the body of the 30S subunit. With S5 and S12 plays an important role in translational accuracy. The polypeptide is Small ribosomal subunit protein uS4 (Picosynechococcus sp. (strain ATCC 27264 / PCC 7002 / PR-6) (Agmenellum quadruplicatum)).